A 27-amino-acid chain; its full sequence is Potassium channel toxin kappa-KTx 2.2 (27 aa).

Intrachain disulfides connect C3-C21 and C7-C17.

The protein belongs to the short scorpion toxin superfamily. Potassium channel inhibitor kappa-KTx family. Kappa-KTx 2 subfamily. As to expression, expressed by the venom gland.

It localises to the secreted. Its function is as follows. OmTx1 decreases the amplitude of the potassium current of the rat channels Kv1.1/KCNA1 by 17% and Kv1.2/KCNA2 by 12% as well as human Kv1.3/KCNA3 by 24%. Functionally, omTx2 decreases the amplitude of the potassium current of the rat channels Kv1.1/KCNA1 by 8% and Kv1.2/KCNA2 by 10% as well as human Kv1.3/KCNA3 by 36%. Also alters glucose-induced insulin release from pancreatic islets. This is Potassium channel toxin kappa-KTx 2.2 from Opisthacanthus madagascariensis (Scorpion).